A 308-amino-acid chain; its full sequence is Homoserine kinase (308 aa).

ATP is bound at residue 94–104 (PLARGLGSSAT).

Belongs to the GHMP kinase family. Homoserine kinase subfamily.

The protein localises to the cytoplasm. The catalysed reaction is L-homoserine + ATP = O-phospho-L-homoserine + ADP + H(+). The protein operates within amino-acid biosynthesis; L-threonine biosynthesis; L-threonine from L-aspartate: step 4/5. Functionally, catalyzes the ATP-dependent phosphorylation of L-homoserine to L-homoserine phosphate. In Crocosphaera subtropica (strain ATCC 51142 / BH68) (Cyanothece sp. (strain ATCC 51142)), this protein is Homoserine kinase.